We begin with the raw amino-acid sequence, 849 residues long: MATSCESTVLKPDGKLNSHVKIPIAHPRSSSTIRFDPPKTHDMVRSLFDPTLKKSFLECCITATIIGNVILCYYAYQHLGANTTKIIFLSQYIFWRLSYNLGIGIVLHYQSHYESLTNFAKKHTLFDKKANNLLSRFVKFEISAKYQKGDSLYRYPEEWNTWLLFRQFVDLILMQDFTTYMLYVVISLPHNDILNNITSFNSIGIRVWLGVLMVLFNIWVKIDAHSVVKDYAWYWGDFFFLQDANLVFDGVFNVFPHPMYSIGYIGYYGLSLISGDHHVLFVSILGHCLQFLFLKYVETPHIERIYGSDSSDEEESIDDKMVKQLDNYSKPLVTTFLGFKNFDKFKPTDYITLITVASIVIGCTILNPSFVTLSKIALTTKIVSSVINMTILYKQSNSKWFTSLYLKNGYNEIYAYQMWQFIYNLHSTINYILLVLQCYYHFVKCDSGSYNTITFGLLLLAIQIWCNTEIFHSIKEFGWFYGDFFLPNLIDKRKLKNDGIYRYLNNPERVFGVAGIWGTVLINNFSNWNLWLATTWTMFNWFTVKFIETPHLLKVYGTKPTSSGFEKTLTKYKFGKDFKSLIDKVDQLLDDYLFTSLVPKQSVAEADREGDWESIINMLLIREQTVKNLQGTGHFNLDIVNINDENTIRIPEEIEIKWAVTNEAFHKDDWIGLYKVVETGEDRLTTKIPSQGHWSAVSSSSSYSEDHQKILHFDSNDHFTYGSIKFDKSILCFEEGIYEFRYHSANSHDVVMISKPFKLLFPQFKETVKDVDQLIATTKQFLKQCGVLINDNKFDLNRNKYFTGKTLQNWYKSTMDTDVSVVYMKRTNFDIDIITKKVWQIKQVLDNLE.

Topologically, residues 1–55 (MATSCESTVLKPDGKLNSHVKIPIAHPRSSSTIRFDPPKTHDMVRSLFDPTLKKS) are lumenal. A helical transmembrane segment spans residues 56–76 (FLECCITATIIGNVILCYYAY). The Cytoplasmic segment spans residues 77 to 85 (QHLGANTTK). Residues 86–106 (IIFLSQYIFWRLSYNLGIGIV) form a helical membrane-spanning segment. Residues 107–167 (LHYQSHYESL…EWNTWLLFRQ (61 aa)) are Lumenal-facing. A helical transmembrane segment spans residues 168 to 188 (FVDLILMQDFTTYMLYVVISL). Residues 189–199 (PHNDILNNITS) are Cytoplasmic-facing. Residues 200–220 (FNSIGIRVWLGVLMVLFNIWV) form a helical membrane-spanning segment. Topologically, residues 221 to 231 (KIDAHSVVKDY) are lumenal. The chain crosses the membrane as a helical span at residues 232–252 (AWYWGDFFFLQDANLVFDGVF). The Cytoplasmic portion of the chain corresponds to 253–264 (NVFPHPMYSIGY). Residues 265 to 285 (IGYYGLSLISGDHHVLFVSIL) traverse the membrane as a helical segment. The Lumenal segment spans residues 286–350 (GHCLQFLFLK…NFDKFKPTDY (65 aa)). A helical membrane pass occupies residues 351 to 371 (ITLITVASIVIGCTILNPSFV). Residues 372–375 (TLSK) are Cytoplasmic-facing. Residues 376–393 (IALTTKIVSSVINMTILY) traverse the membrane as a helical segment. At 394–417 (KQSNSKWFTSLYLKNGYNEIYAYQ) the chain is on the lumenal side. The helical transmembrane segment at 418–438 (MWQFIYNLHSTINYILLVLQC) threads the bilayer. The Cytoplasmic portion of the chain corresponds to 439–451 (YYHFVKCDSGSYN). The helical transmembrane segment at 452 to 472 (TITFGLLLLAIQIWCNTEIFH) threads the bilayer. At 473 to 509 (SIKEFGWFYGDFFLPNLIDKRKLKNDGIYRYLNNPER) the chain is on the lumenal side. Residues 510–530 (VFGVAGIWGTVLINNFSNWNL) form a helical membrane-spanning segment. Topologically, residues 531–849 (WLATTWTMFN…QIKQVLDNLE (319 aa)) are cytoplasmic.

It belongs to the class VI-like SAM-binding methyltransferase superfamily. CHO2 family.

It is found in the endoplasmic reticulum membrane. It carries out the reaction a 1,2-diacyl-sn-glycero-3-phosphoethanolamine + S-adenosyl-L-methionine = a 1,2-diacyl-sn-glycero-3-phospho-N-methylethanolamine + S-adenosyl-L-homocysteine + H(+). It functions in the pathway phospholipid metabolism; phosphatidylcholine biosynthesis. Its function is as follows. Catalyzes the first step of the methylation pathway of phosphatidylcholine biosynthesis, the SAM-dependent methylation of phosphatidylethanolamine (PE) to phosphatidylmonomethylethanolamine (PMME). The polypeptide is Phosphatidylethanolamine N-methyltransferase (CHO2) (Kluyveromyces lactis (strain ATCC 8585 / CBS 2359 / DSM 70799 / NBRC 1267 / NRRL Y-1140 / WM37) (Yeast)).